The sequence spans 222 residues: Probable RNA 2'-phosphotransferase (222 aa).

This sequence belongs to the KptA/TPT1 family.

Removes the 2'-phosphate from RNA via an intermediate in which the phosphate is ADP-ribosylated by NAD followed by a presumed transesterification to release the RNA and generate ADP-ribose 1''-2''-cyclic phosphate (APPR&gt;P). May function as an ADP-ribosylase. The protein is Probable RNA 2'-phosphotransferase of Haloarcula marismortui (strain ATCC 43049 / DSM 3752 / JCM 8966 / VKM B-1809) (Halobacterium marismortui).